The sequence spans 87 residues: MNSLLMITTCLVLFGTVWAKEGYLVSKSTGCKYECFWLGKNEGCDKECKAPNQGGGYGYCHAFACWCENLPESTPTYPIPGKSCGKK.

An N-terminal signal peptide occupies residues 1–19 (MNSLLMITTCLVLFGTVWA). The 66-residue stretch at 20–85 (KEGYLVSKST…TYPIPGKSCG (66 aa)) folds into the LCN-type CS-alpha/beta domain. Intrachain disulfides connect Cys31–Cys84, Cys35–Cys60, Cys44–Cys65, and Cys48–Cys67. Cys84 is modified (cysteine amide). The propeptide occupies 85–87 (GKK).

It belongs to the long (4 C-C) scorpion toxin superfamily. Sodium channel inhibitor family. Beta subfamily. Expressed by the venom gland.

The protein resides in the secreted. Its function is as follows. Beta toxins bind voltage-independently at site-4 of sodium channels (Nav) and shift the voltage of activation toward more negative potentials thereby affecting sodium channel activation and promoting spontaneous and repetitive firing. This is Neurotoxin Cex1 from Centruroides exilicauda (Bark scorpion).